A 98-amino-acid chain; its full sequence is Defensin-A (98 aa).

The signal sequence occupies residues 1–18 (MKSITVICFLALCTVAIT). A propeptide spanning residues 19 to 58 (SAYPQEPVLADEARPFANSLFDELPEETYQAAVENFRLKR) is cleaved from the precursor. 3 cysteine pairs are disulfide-bonded: C61/C88, C74/C94, and C78/C96.

Belongs to the invertebrate defensin family. Type 1 subfamily.

It is found in the secreted. Its function is as follows. Antibacterial peptide mostly active against Gram-positive bacteria. Has activity against the bacteria Gram-negative E.cloacae beta12. The chain is Defensin-A (DEFA) from Aedes aegypti (Yellowfever mosquito).